The chain runs to 448 residues: Tubulin beta chain (448 aa).

Q11, E69, S138, G142, T143, G144, N204, and N226 together coordinate GTP. Position 69 (E69) interacts with Mg(2+). The disordered stretch occupies residues Y425–E448. Residues E432–E448 are compositionally biased toward acidic residues.

Belongs to the tubulin family. As to quaternary structure, dimer of alpha and beta chains. A typical microtubule is a hollow water-filled tube with an outer diameter of 25 nm and an inner diameter of 15 nM. Alpha-beta heterodimers associate head-to-tail to form protofilaments running lengthwise along the microtubule wall with the beta-tubulin subunit facing the microtubule plus end conferring a structural polarity. Microtubules usually have 13 protofilaments but different protofilament numbers can be found in some organisms and specialized cells. The cofactor is Mg(2+).

The protein resides in the cytoplasm. It is found in the cytoskeleton. Its function is as follows. Tubulin is the major constituent of microtubules, a cylinder consisting of laterally associated linear protofilaments composed of alpha- and beta-tubulin heterodimers. Microtubules grow by the addition of GTP-tubulin dimers to the microtubule end, where a stabilizing cap forms. Below the cap, tubulin dimers are in GDP-bound state, owing to GTPase activity of alpha-tubulin. In Aspergillus parasiticus, this protein is Tubulin beta chain (benR).